We begin with the raw amino-acid sequence, 368 residues long: 7,8-didemethyl-8-hydroxy-5-deazariboflavin synthase (368 aa).

In terms of domain architecture, Radical SAM core spans 36–272 (LSYCRNVFLP…EEVSVQVPPN (237 aa)). [4Fe-4S] cluster contacts are provided by Cys-50, Cys-54, and Cys-57.

It belongs to the radical SAM superfamily. CofG family. In terms of assembly, consists of two subunits, CofG and CofH. Requires [4Fe-4S] cluster as cofactor.

The enzyme catalyses 5-amino-5-(4-hydroxybenzyl)-6-(D-ribitylimino)-5,6-dihydrouracil + S-adenosyl-L-methionine = 7,8-didemethyl-8-hydroxy-5-deazariboflavin + 5'-deoxyadenosine + L-methionine + NH4(+) + H(+). It functions in the pathway cofactor biosynthesis; coenzyme F0 biosynthesis. Catalyzes the radical-mediated synthesis of 7,8-didemethyl-8-hydroxy-5-deazariboflavin from 5-amino-5-(4-hydroxybenzyl)-6-(D-ribitylimino)-5,6-dihydrouracil. The sequence is that of 7,8-didemethyl-8-hydroxy-5-deazariboflavin synthase from Haloarcula marismortui (strain ATCC 43049 / DSM 3752 / JCM 8966 / VKM B-1809) (Halobacterium marismortui).